The primary structure comprises 310 residues: Protein-L-isoaspartate O-methyltransferase (310 aa).

2 disordered regions span residues 1–46 and 60–79; these read MSGE…DKPA and ALPG…TVLK. Positions 14–34 are enriched in basic and acidic residues; it reads EDLKRAPRKSEVRSGSGERHA. Over residues 35 to 46 the composition is skewed to low complexity; that stretch reads ASAVPKAADKPA. Residue serine 157 is part of the active site.

The protein belongs to the methyltransferase superfamily. L-isoaspartyl/D-aspartyl protein methyltransferase family.

The protein localises to the cytoplasm. The enzyme catalyses [protein]-L-isoaspartate + S-adenosyl-L-methionine = [protein]-L-isoaspartate alpha-methyl ester + S-adenosyl-L-homocysteine. Catalyzes the methyl esterification of L-isoaspartyl residues in peptides and proteins that result from spontaneous decomposition of normal L-aspartyl and L-asparaginyl residues. It plays a role in the repair and/or degradation of damaged proteins. In Burkholderia ambifaria (strain ATCC BAA-244 / DSM 16087 / CCUG 44356 / LMG 19182 / AMMD) (Burkholderia cepacia (strain AMMD)), this protein is Protein-L-isoaspartate O-methyltransferase.